A 212-amino-acid polypeptide reads, in one-letter code: Interleukin-6 (212 aa).

The N-terminal stretch at 1–29 (MNSFSTSAFGPVAFSLGLLLVLPAAFPAP) is a signal peptide. Cystine bridges form between Cys-72/Cys-78 and Cys-101/Cys-111. N-linked (GlcNAc...) asparagine glycosylation occurs at Asn-73. Asn-172 carries an N-linked (GlcNAc...) asparagine glycan.

The protein belongs to the IL-6 superfamily. Component of a hexamer of two molecules each of IL6, IL6R and IL6ST; first binds to IL6R to associate with the signaling subunit IL6ST. Interacts with IL6R (via the N-terminal ectodomain); this interaction may be affected by IL6R-binding with SORL1, hence decreasing IL6 cis signaling. Interacts with SORL1 (via the N-terminal ectodomain); this interaction leads to IL6 internalization and lysosomal degradation. May form a trimeric complex with the soluble SORL1 ectodomain and soluble IL6R receptor; this interaction might stabilize circulating IL6, hence promoting IL6 trans signaling.

It localises to the secreted. Cytokine with a wide variety of biological functions in immunity, tissue regeneration, and metabolism. Binds to IL6R, then the complex associates to the signaling subunit IL6ST/gp130 to trigger the intracellular IL6-signaling pathway. The interaction with the membrane-bound IL6R and IL6ST stimulates 'classic signaling', whereas the binding of IL6 and soluble IL6R to IL6ST stimulates 'trans-signaling'. Alternatively, 'cluster signaling' occurs when membrane-bound IL6:IL6R complexes on transmitter cells activate IL6ST receptors on neighboring receiver cells. Functionally, IL6 is a potent inducer of the acute phase response. Rapid production of IL6 contributes to host defense during infection and tissue injury, but excessive IL6 synthesis is involved in disease pathology. In the innate immune response, is synthesized by myeloid cells, such as macrophages and dendritic cells, upon recognition of pathogens through toll-like receptors (TLRs) at the site of infection or tissue injury. In the adaptive immune response, is required for the differentiation of B cells into immunoglobulin-secreting cells. Plays a major role in the differentiation of CD4(+) T cell subsets. Essential factor for the development of T follicular helper (Tfh) cells that are required for the induction of germinal-center formation. Required to drive naive CD4(+) T cells to the Th17 lineage. Also required for proliferation of myeloma cells and the survival of plasmablast cells. In terms of biological role, acts as an essential factor in bone homeostasis and on vessels directly or indirectly by induction of VEGF, resulting in increased angiogenesis activity and vascular permeability. Induces, through 'trans-signaling' and synergistically with IL1B and TNF, the production of VEGF. Involved in metabolic controls, is discharged into the bloodstream after muscle contraction increasing lipolysis and improving insulin resistance. 'Trans-signaling' in central nervous system also regulates energy and glucose homeostasis. Mediates, through GLP-1, crosstalk between insulin-sensitive tissues, intestinal L cells and pancreatic islets to adapt to changes in insulin demand. Also acts as a myokine. Plays a protective role during liver injury, being required for maintenance of tissue regeneration. Also has a pivotal role in iron metabolism by regulating HAMP/hepcidin expression upon inflammation or bacterial infection. Through activation of IL6ST-YAP-NOTCH pathway, induces inflammation-induced epithelial regeneration. The protein is Interleukin-6 (IL6) of Cercocebus atys (Sooty mangabey).